The sequence spans 50 residues: Large ribosomal subunit protein bL33B (50 aa).

Belongs to the bacterial ribosomal protein bL33 family.

This chain is Large ribosomal subunit protein bL33B (rpmG2), found in Enterococcus faecalis (strain ATCC 700802 / V583).